Consider the following 491-residue polypeptide: UDP-N-acetylmuramate--L-alanine ligase (491 aa).

126–132 (GTHGKTT) lines the ATP pocket.

This sequence belongs to the MurCDEF family.

Its subcellular location is the cytoplasm. The enzyme catalyses UDP-N-acetyl-alpha-D-muramate + L-alanine + ATP = UDP-N-acetyl-alpha-D-muramoyl-L-alanine + ADP + phosphate + H(+). The protein operates within cell wall biogenesis; peptidoglycan biosynthesis. Functionally, cell wall formation. The polypeptide is UDP-N-acetylmuramate--L-alanine ligase (Salmonella arizonae (strain ATCC BAA-731 / CDC346-86 / RSK2980)).